The following is a 293-amino-acid chain: Kallikrein-5 (293 aa).

The signal sequence occupies residues M1–G22. A compositionally biased stretch (polar residues) spans H37–D49. Residues H37 to I68 are disordered. The region spanning I67–Q290 is the Peptidase S1 domain. An N-linked (GlcNAc...) asparagine glycan is attached at N69. Intrachain disulfides connect C73–C206, C93–C109, C178–C279, C185–C251, C217–C231, and C241–C266. Catalysis depends on charge relay system residues H108 and D153. 2 N-linked (GlcNAc...) asparagine glycosylation sites follow: N173 and N208. S245 acts as the Charge relay system in catalysis. N-linked (GlcNAc...) asparagine glycosylation is present at N252.

Belongs to the peptidase S1 family. Kallikrein subfamily. As to quaternary structure, interacts with SPINK9. In terms of tissue distribution, expressed in skin, breast, brain and testis. Expressed at the stratum granulosum of palmar skin.

It is found in the secreted. Its activity is regulated as follows. Inhibited by Zn2+. Functionally, may be involved in desquamation. The chain is Kallikrein-5 from Homo sapiens (Human).